The primary structure comprises 724 residues: Transcription factor dcp-66 (724 aa).

Composition is skewed to polar residues over residues 1 to 12 (MAQVQQVPSSPM) and 56 to 70 (GASTSIDTDDLQLSP). Disordered stretches follow at residues 1 to 23 (MAQVQQVPSSPMNGIPEKNGNGL) and 55 to 129 (NGAS…KRRL). The span at 85-95 (AQEKIKLKDDI) shows a compositional bias: basic and acidic residues. The span at 105 to 119 (DDDDMEDEELGDEIN) shows a compositional bias: acidic residues. A coiled-coil region spans residues 186-216 (EEQLRERLNMRREAENQLREEEAKLLVLRKM). 2 disordered regions span residues 328-361 (KELSAAETNASASASPAVQQSQQAQQPQQAQITQ) and 523-590 (AAPA…QLQQ). Residues 332–358 (AAETNASASASPAVQQSQQAQQPQQAQ) show a composition bias toward low complexity. 2 stretches are compositionally biased toward polar residues: residues 527–541 (TSQTIPTSSTATVSS) and 551–564 (IPSSTGSSTPTQAV). A compositionally biased stretch (low complexity) spans 565 to 590 (KTSTPIHSTPKSSSSSAKKTAAQLQQ).

Expressed at low levels in excretory cell, pharynx, vulva, and posterior neurons in adults. Strongly expressed in the excretory cell and more weakly in the pharynx in larva. Embryonic expression in the excretory cell.

It is found in the nucleus. Transcription factor which binds to the 5'-CCATACATTA-3' motif found in the promoter region of pgp-12 and activates its expression in the excretory cell. This Caenorhabditis elegans protein is Transcription factor dcp-66.